We begin with the raw amino-acid sequence, 88 residues long: UPF0223 protein BH2638 (88 aa).

Belongs to the UPF0223 family.

The sequence is that of UPF0223 protein BH2638 from Halalkalibacterium halodurans (strain ATCC BAA-125 / DSM 18197 / FERM 7344 / JCM 9153 / C-125) (Bacillus halodurans).